Here is a 390-residue protein sequence, read N- to C-terminus: 4-hydroxy-3-methylbut-2-en-1-yl diphosphate synthase (flavodoxin) (390 aa).

The [4Fe-4S] cluster site is built by Cys-281, Cys-284, Cys-316, and Glu-323.

Belongs to the IspG family. [4Fe-4S] cluster is required as a cofactor.

It carries out the reaction (2E)-4-hydroxy-3-methylbut-2-enyl diphosphate + oxidized [flavodoxin] + H2O + 2 H(+) = 2-C-methyl-D-erythritol 2,4-cyclic diphosphate + reduced [flavodoxin]. The protein operates within isoprenoid biosynthesis; isopentenyl diphosphate biosynthesis via DXP pathway; isopentenyl diphosphate from 1-deoxy-D-xylulose 5-phosphate: step 5/6. Converts 2C-methyl-D-erythritol 2,4-cyclodiphosphate (ME-2,4cPP) into 1-hydroxy-2-methyl-2-(E)-butenyl 4-diphosphate. In Salinispora arenicola (strain CNS-205), this protein is 4-hydroxy-3-methylbut-2-en-1-yl diphosphate synthase (flavodoxin).